Here is an 86-residue protein sequence, read N- to C-terminus: Small ribosomal subunit protein bS18c (86 aa).

Belongs to the bacterial ribosomal protein bS18 family. In terms of assembly, part of the 30S ribosomal subunit.

It localises to the plastid. The protein resides in the chloroplast. The protein is Small ribosomal subunit protein bS18c of Pseudotsuga menziesii (Douglas-fir).